The chain runs to 101 residues: Interleukin-8 (101 aa).

The N-terminal stretch at 1–22 (MTSKLAIALLAAFLLSAALCKA) is a signal peptide. At Arg-27 the chain carries Citrulline. 2 disulfides stabilise this stretch: Cys-34–Cys-61 and Cys-36–Cys-77.

Belongs to the intercrine alpha (chemokine CxC) family. Homodimer. In terms of processing, citrullination at Arg-27 prevents proteolysis, and dampens tissue inflammation, it also enhances leukocytosis, possibly through impaired chemokine clearance from the blood circulation.

Its subcellular location is the secreted. Chemotactic factor that mediates inflammatory response by attracting neutrophils, basophils, and T-cells to clear pathogens and protect the host from infection. Also plays an important role in neutrophil activation. Released in response to an inflammatory stimulus, exerts its effect by binding to the G-protein-coupled receptors CXCR1 and CXCR2, primarily found in neutrophils, monocytes and endothelial cells. G-protein heterotrimer (alpha, beta, gamma subunits) constitutively binds to CXCR1/CXCR2 receptor and activation by IL8 leads to beta and gamma subunits release from Galpha (GNAI2 in neutrophils) and activation of several downstream signaling pathways including PI3K and MAPK pathways. The polypeptide is Interleukin-8 (CXCL8) (Tursiops truncatus (Atlantic bottle-nosed dolphin)).